The following is a 256-amino-acid chain: MALPEFTMRQLLEAGVHFGHQTQRWNPRMSPFIYGARNGIHIMDLTQTVPMLDQALTAIRDTVAKGGRVLFVGTKRQAAAPIAEAAEKSAQYYMNHRWLGGTLTNWKTVSQSINRLKEIDERMAAGAEGLTKKERLGMERDQEKLQASLGGIRDMGGVPDLLFVIDVKKEALAIAEANKLGIPVVAVVDTNCSPDGVDYIIPGNDDAARAISLYCDLVARAALDGMSAQLGAAGVDLGALEEAPVEEAVAEEAAGA.

This sequence belongs to the universal ribosomal protein uS2 family.

The sequence is that of Small ribosomal subunit protein uS2 from Ruegeria sp. (strain TM1040) (Silicibacter sp.).